Here is a 306-residue protein sequence, read N- to C-terminus: Glutathione transport system permease protein GsiC (306 aa).

Topologically, residues Met-1 to Arg-8 are cytoplasmic. The helical transmembrane segment at Leu-9–Leu-29 threads the bilayer. The Periplasmic portion of the chain corresponds to Leu-30–Thr-98. Residues Phe-95 to Val-292 form the ABC transmembrane type-1 domain. A helical transmembrane segment spans residues Phe-99–Val-119. The Cytoplasmic portion of the chain corresponds to Ser-120–Arg-130. A helical transmembrane segment spans residues Ile-131–Leu-151. Residues Met-152–Asp-168 lie on the Periplasmic side of the membrane. A helical transmembrane segment spans residues Thr-169–Ala-189. At Arg-190–Leu-228 the chain is on the cytoplasmic side. A helical membrane pass occupies residues Ile-229 to Val-249. The Periplasmic segment spans residues Glu-250 to Val-278. Residues Leu-279–Ile-299 form a helical membrane-spanning segment. At Asn-300 to Lys-306 the chain is on the cytoplasmic side.

This sequence belongs to the binding-protein-dependent transport system permease family. In terms of assembly, the complex is composed of two ATP-binding proteins (GsiA), two transmembrane proteins (GsiC and GsiD) and a solute-binding protein (GsiB).

The protein resides in the cell inner membrane. In terms of biological role, part of the ABC transporter complex GsiABCD involved in glutathione import. Probably responsible for the translocation of the substrate across the membrane. The sequence is that of Glutathione transport system permease protein GsiC from Pectobacterium atrosepticum (strain SCRI 1043 / ATCC BAA-672) (Erwinia carotovora subsp. atroseptica).